The following is a 242-amino-acid chain: Peptidyl-prolyl cis-trans isomerase FKBP20-2, chloroplastic (242 aa).

A chloroplast-targeting transit peptide spans 1–31 (MVTILSTPLSPRLTFLCETKLSLSRSNRSVC). The transit peptide at 32 to 67 (CSLSEEPKDQCLSRRSLVYVLVASPCLLLPALSSSA) directs the protein to the thylakoid. Positions 138–225 (GQQVTFHYIG…VFDVELLSIQ (88 aa)) constitute a PPIase FKBP-type domain. Cys227 and Cys241 form a disulfide bridge.

It belongs to the FKBP-type PPIase family. Interacts in vitro with LTO1.

The protein resides in the plastid. It is found in the chloroplast thylakoid lumen. The enzyme catalyses [protein]-peptidylproline (omega=180) = [protein]-peptidylproline (omega=0). Its function is as follows. PPIases accelerate the folding of proteins. It catalyzes the cis-trans isomerization of proline imidic peptide bonds in oligopeptides. Involved in the accumulation of the PSII complex. The chain is Peptidyl-prolyl cis-trans isomerase FKBP20-2, chloroplastic from Arabidopsis thaliana (Mouse-ear cress).